The primary structure comprises 451 residues: Spermidine sinapoyl-CoA acyltransferase (451 aa).

Y47, H169, S294, D316, and L378 together coordinate spermidine. Residue H169 is the Proton acceptor of the active site. The Proton acceptor role is filled by D391.

This sequence belongs to the plant acyltransferase family. In terms of assembly, monomer. As to expression, predominantly expressed in siliques, especially in seeds around the embryo, and, at low levels, in flowers. Barely detectable in stems, leaves, and roots.

The catalysed reaction is 2 (E)-sinapoyl-CoA + spermidine = N(1),N(8)-bis[(E)-sinapoyl]-spermidine + 2 CoA + 2 H(+). It functions in the pathway amine and polyamine metabolism; spermidine metabolism. Its function is as follows. Spermidine sinapoyl-CoA acyltransferase that mediates the accumulation of disinapoyl spermidine conjugates in seeds. Catalyzes the two conjugating steps required for the biosynthesis of N1,N8-disipanoyl-spermidine. Can also use putrescine as an acyl acceptor to convert it into monosinapoyl-putrescine. In Arabidopsis thaliana (Mouse-ear cress), this protein is Spermidine sinapoyl-CoA acyltransferase.